Consider the following 688-residue polypeptide: MKVQITNSRTEEILKVQANNENDEVSKATPGEVEESLRLIGDLKFFLATAPVNWQENQIIRRYYLNSGQGFVSCVFWNNLYYITGTDIVKCCLYRMQKFGREVVQKKKFEEGIFSDLRNLKCGIDATLEQPKSEFLSFLFRNMCLKTQKKQKVFFWFSVAHDKLFADALERDLKRESLNQPSTTKPVNEPALSFSYDSSSDKPLYDQLLQHLDSRRPSSTTKSDNSPPKLESENFKDNELVTVTNQPLLGVGLMDDDAPESPSQINDFIPQKLIIEPNTLELNGLTEETPHDLPKNTAKGRDEEDFPLDYFPVSVEYPTEENAFDPFPPQAFTPAAPSMPISYDNVNERDSMPVNSLLNRYPYQLSVAPTFPVPPSSSRQHFMTNRDFYSSNNNKEKLVSPSDPTSYMKYDEPVMDFDESRPNENCTNAKSHNSGQQTKQHQLYSNNFQQSYPNGMVPGYYPKMPYNPMGGDPLLDQAFYGADDFFFPPEGCDNNMLYPQTATSWNVLPPQAMQPAPTYVGRPYTPNYRSTPGSAMFPYMQSSNSMQWNTAVSPYSSRAPSTTAKNYPPSTFYSQNINQYPRRRTVGMKSSQGNVPTGNKQSVGKSAKISKPLHIKTSAYQKQYKINLETKARPSAGDEDSAHPDKNKEISMPTPDSNTLVVQSEEGGAHSLEVDTNRRSDKNLPDAT.

At Thr29 the chain carries Phosphothreonine. A DNA-binding region spans residues 57 to 167; that stretch reads NQIIRRYYLN…SVAHDKLFAD (111 aa). Disordered regions lie at residues 177–199, 211–239, and 285–305; these read SLNQ…YDSS, HLDS…KDNE, and LTEE…DEED. Residues Ser214 and Ser226 each carry the phosphoserine modification. Over residues 217 to 226 the composition is skewed to polar residues; the sequence is PSSTTKSDNS. Basic and acidic residues-rich tracts occupy residues 230–239 and 288–302; these read LESENFKDNE and ETPH…KGRD. Residue Thr289 is modified to Phosphothreonine. A Phosphoserine modification is found at Ser400. 2 disordered regions span residues 587–610 and 630–688; these read GMKS…AKIS and TKAR…PDAT. Positions 588 to 604 are enriched in polar residues; that stretch reads MKSSQGNVPTGNKQSVG. Basic and acidic residues-rich tracts occupy residues 640–649 and 672–688; these read DSAHPDKNKE and LEVD…PDAT.

It belongs to the STE12 transcription factor family. As to quaternary structure, interacts with mating-type protein ALPHA1. Phosphorylated by the STE7, STE11 and STE20 kinases.

The protein localises to the nucleus. Binds to the DNA sequence mediating pheromone induction (called the pheromone response element = PRE) which is found in the upstream control region of several a-, alpha- and haploid-specific genes. Involved in mating of haploids and in pseudohyphae formation in diploids. In Saccharomyces cerevisiae (strain ATCC 204508 / S288c) (Baker's yeast), this protein is Protein STE12 (STE12).